Reading from the N-terminus, the 91-residue chain is ATP synthase subunit c (91 aa).

A run of 2 helical transmembrane segments spans residues 4 to 24 and 53 to 73; these read FTMC…GTGI and IGLA…LIIL.

Belongs to the ATPase C chain family. As to quaternary structure, F-type ATPases have 2 components, F(1) - the catalytic core - and F(0) - the membrane proton channel. F(1) has five subunits: alpha(3), beta(3), gamma(1), delta(1), epsilon(1). F(0) has three main subunits: a(1), b(2) and c(10-14). The alpha and beta chains form an alternating ring which encloses part of the gamma chain. F(1) is attached to F(0) by a central stalk formed by the gamma and epsilon chains, while a peripheral stalk is formed by the delta and b chains.

It localises to the cell inner membrane. In terms of biological role, f(1)F(0) ATP synthase produces ATP from ADP in the presence of a proton or sodium gradient. F-type ATPases consist of two structural domains, F(1) containing the extramembraneous catalytic core and F(0) containing the membrane proton channel, linked together by a central stalk and a peripheral stalk. During catalysis, ATP synthesis in the catalytic domain of F(1) is coupled via a rotary mechanism of the central stalk subunits to proton translocation. Its function is as follows. Key component of the F(0) channel; it plays a direct role in translocation across the membrane. A homomeric c-ring of between 10-14 subunits forms the central stalk rotor element with the F(1) delta and epsilon subunits. This chain is ATP synthase subunit c, found in Geotalea daltonii (strain DSM 22248 / JCM 15807 / FRC-32) (Geobacter daltonii).